Consider the following 167-residue polypeptide: Ubiquitin-conjugating enzyme E2 15 (167 aa).

The region spanning 5–165 is the UBC core domain; sequence ASEQLLRKQL…VRRLVRRSIE (161 aa). Cys-90 functions as the Glycyl thioester intermediate in the catalytic mechanism.

Belongs to the ubiquitin-conjugating enzyme family.

The catalysed reaction is S-ubiquitinyl-[E1 ubiquitin-activating enzyme]-L-cysteine + [E2 ubiquitin-conjugating enzyme]-L-cysteine = [E1 ubiquitin-activating enzyme]-L-cysteine + S-ubiquitinyl-[E2 ubiquitin-conjugating enzyme]-L-cysteine.. It participates in protein modification; protein ubiquitination. Functionally, catalyzes the covalent attachment of ubiquitin to other proteins. Has a role in the formation of chromatin structures that influence the localization of transcriptional silencing factors. The chain is Ubiquitin-conjugating enzyme E2 15 (ubc15) from Schizosaccharomyces pombe (strain 972 / ATCC 24843) (Fission yeast).